A 483-amino-acid polypeptide reads, in one-letter code: V-type proton ATPase subunit H (483 aa).

Phosphoserine is present on Ser483.

The protein belongs to the V-ATPase H subunit family. In terms of assembly, V-ATPase is a heteromultimeric enzyme made up of two complexes: the ATP-hydrolytic V1 complex and the proton translocation V0 complex. The V1 complex consists of three catalytic AB heterodimers that form a heterohexamer, three peripheral stalks each consisting of EG heterodimers, one central rotor including subunits D and F, and the regulatory subunits C and H. The proton translocation complex V0 consists of the proton transport subunit a, a ring of proteolipid subunits c9c'', rotary subunit d, subunits e and f, and the accessory subunits ATP6AP1/Ac45 and ATP6AP2/PRR. Interacts with AP2M1.

It is found in the cytoplasmic vesicle. The protein resides in the clathrin-coated vesicle membrane. In terms of biological role, subunit of the V1 complex of vacuolar(H+)-ATPase (V-ATPase), a multisubunit enzyme composed of a peripheral complex (V1) that hydrolyzes ATP and a membrane integral complex (V0) that translocates protons. V-ATPase is responsible for acidifying and maintaining the pH of intracellular compartments and in some cell types, is targeted to the plasma membrane, where it is responsible for acidifying the extracellular environment. Subunit H is essential for V-ATPase activity, but not for the assembly of the complex. Involved in the endocytosis mediated by clathrin-coated pits, required for the formation of endosomes. This is V-type proton ATPase subunit H (ATP6V1H) from Sus scrofa (Pig).